Consider the following 388-residue polypeptide: UDP-galactose transporter senju (388 aa).

10 consecutive transmembrane segments (helical) span residues 13–33 (LTFV…IFVT), 46–66 (TVTV…CLYC), 84–104 (VLGL…LAFV), 113–133 (TYYL…QIIF), 142–162 (WISL…FGSF), 202–222 (FSLS…AGVY), 236–256 (IFVQ…VILL), 276–296 (FSVL…SFFL), 309–329 (ALEL…PIYM), and 331–351 (TALA…SPVV).

It belongs to the nucleotide-sugar transporter family.

Its subcellular location is the golgi apparatus membrane. Its function is as follows. UDP-galactose transporter involved in the synthesis of galactose-containing glycans. Plays a role in quiescence of the innate immune response, possibly by regulating glycosylation of the Toll pathway ligand spz. The chain is UDP-galactose transporter senju from Drosophila melanogaster (Fruit fly).